The following is a 499-amino-acid chain: Cytochrome P450 monooxygenase ausI (499 aa).

Residues Pro10–Tyr30 traverse the membrane as a helical segment. Cys439 contacts heme. Asn483 is a glycosylation site (N-linked (GlcNAc...) asparagine).

Belongs to the cytochrome P450 family. Heme is required as a cofactor.

Its subcellular location is the membrane. The protein operates within secondary metabolite biosynthesis; terpenoid biosynthesis. Cytochrome P450 monooxygenase; part of the gene cluster B that mediates the biosynthesis of austinol and dehydroaustinol, two fungal meroterpenoids. The first step of the pathway is the synthesis of 3,5-dimethylorsellinic acid by the polyketide synthase ausA. 3,5-dimethylorsellinic acid is then prenylated by the polyprenyl transferase ausN. Further epoxidation by the FAD-dependent monooxygenase ausM and cyclization by the probable terpene cyclase ausL lead to the formation of protoaustinoid A. Protoaustinoid A is then oxidized to spiro-lactone preaustinoid A3 by the combined action of the FAD-binding monooxygenases ausB and ausC, and the dioxygenase ausE. Acid-catalyzed keto-rearrangement and ring contraction of the tetraketide portion of preaustinoid A3 by ausJ lead to the formation of preaustinoid A4. The aldo-keto reductase ausK, with the help of ausH, is involved in the next step by transforming preaustinoid A4 into isoaustinone which is in turn hydroxylated by the P450 monooxygenase ausI to form austinolide. Finally, the cytochrome P450 monooxygenase ausG modifies austinolide to austinol. Austinol can be further modified to dehydroaustinol which forms a diffusible complex with diorcinol that initiates conidiation. Due to genetic rearrangements of the clusters and the subsequent loss of some enzymes, the end products of the Emericella nidulans austinoid biosynthesis clusters are austinol and dehydroaustinol, even if additional enzymes, such as the O-acetyltransferase ausQ and the cytochrome P450 monooxygenase ausR are still functional. The sequence is that of Cytochrome P450 monooxygenase ausI from Emericella nidulans (strain FGSC A4 / ATCC 38163 / CBS 112.46 / NRRL 194 / M139) (Aspergillus nidulans).